A 196-amino-acid polypeptide reads, in one-letter code: Deoxyribose-phosphate aldolase (196 aa).

Catalysis depends on D91, which acts as the Proton donor/acceptor. Residue K153 is the Schiff-base intermediate with acetaldehyde of the active site. The Proton donor/acceptor role is filled by K182.

The protein belongs to the DeoC/FbaB aldolase family. DeoC type 1 subfamily.

The protein localises to the cytoplasm. The catalysed reaction is 2-deoxy-D-ribose 5-phosphate = D-glyceraldehyde 3-phosphate + acetaldehyde. The protein operates within carbohydrate degradation; 2-deoxy-D-ribose 1-phosphate degradation; D-glyceraldehyde 3-phosphate and acetaldehyde from 2-deoxy-alpha-D-ribose 1-phosphate: step 2/2. In terms of biological role, catalyzes a reversible aldol reaction between acetaldehyde and D-glyceraldehyde 3-phosphate to generate 2-deoxy-D-ribose 5-phosphate. This is Deoxyribose-phosphate aldolase from Mycoplasma mycoides subsp. mycoides SC (strain CCUG 32753 / NCTC 10114 / PG1).